Reading from the N-terminus, the 283-residue chain is Splicing factor U2af small subunit B (283 aa).

Residues glutamate 12–proline 40 form a C3H1-type 1 zinc finger. The region spanning proline 44 to valine 146 is the RRM domain. The C3H1-type 2 zinc finger occupies aspartate 148 to glutamine 175. Over residues serine 191–glutamate 210 the composition is skewed to basic residues. Residues serine 191–valine 283 are disordered. Over residues histidine 211–glycine 245 the composition is skewed to basic and acidic residues. Over residues arginine 246–arginine 259 the composition is skewed to basic residues. Basic and acidic residues predominate over residues asparagine 260–valine 283.

Belongs to the splicing factor SR family. Component of the spliceosome. Homo- and heterodimer. Interacts with RNU1, U2AF35A and SR45.

The protein localises to the nucleus speckle. Necessary for the splicing of pre-mRNA. Probably active at the 3' splice sites. The polypeptide is Splicing factor U2af small subunit B (U2AF35B) (Arabidopsis thaliana (Mouse-ear cress)).